Here is a 386-residue protein sequence, read N- to C-terminus: Queuine tRNA-ribosyltransferase (386 aa).

The active-site Proton acceptor is D102. Residues 102 to 106 (DSGGY), D156, Q203, and G230 each bind substrate. An RNA binding region spans residues 261 to 267 (GVGKPDD). Residue D280 is the Nucleophile of the active site. The RNA binding; important for wobble base 34 recognition stretch occupies residues 285 to 289 (TRSGR). Zn(2+) is bound by residues C318, C320, C323, and H349.

This sequence belongs to the queuine tRNA-ribosyltransferase family. In terms of assembly, homodimer. Within each dimer, one monomer is responsible for RNA recognition and catalysis, while the other monomer binds to the replacement base PreQ1. Zn(2+) serves as cofactor.

The catalysed reaction is 7-aminomethyl-7-carbaguanine + guanosine(34) in tRNA = 7-aminomethyl-7-carbaguanosine(34) in tRNA + guanine. The protein operates within tRNA modification; tRNA-queuosine biosynthesis. Its function is as follows. Catalyzes the base-exchange of a guanine (G) residue with the queuine precursor 7-aminomethyl-7-deazaguanine (PreQ1) at position 34 (anticodon wobble position) in tRNAs with GU(N) anticodons (tRNA-Asp, -Asn, -His and -Tyr). Catalysis occurs through a double-displacement mechanism. The nucleophile active site attacks the C1' of nucleotide 34 to detach the guanine base from the RNA, forming a covalent enzyme-RNA intermediate. The proton acceptor active site deprotonates the incoming PreQ1, allowing a nucleophilic attack on the C1' of the ribose to form the product. After dissociation, two additional enzymatic reactions on the tRNA convert PreQ1 to queuine (Q), resulting in the hypermodified nucleoside queuosine (7-(((4,5-cis-dihydroxy-2-cyclopenten-1-yl)amino)methyl)-7-deazaguanosine). This is Queuine tRNA-ribosyltransferase from Zymomonas mobilis subsp. mobilis (strain ATCC 31821 / ZM4 / CP4).